The following is a 153-amino-acid chain: Cystatin-9 (153 aa).

The N-terminal stretch at 1 to 27 (MGRQRRCRWAQPWTLLLLLLGPRLLVT) is a signal peptide.

It belongs to the cystatin family.

The protein localises to the secreted. Its function is as follows. May play a role in hematopoietic differentiation or inflammation. The protein is Cystatin-9 (CST9) of Bos taurus (Bovine).